A 1063-amino-acid chain; its full sequence is Unconventional myosin-Ic (1063 aa).

Residue Met-1 is modified to N-acetylmethionine. The residue at position 10 (Thr-10) is a Phosphoserine. The 685-residue stretch at 47–731 (GVQDFVLLEN…TLFATEDSLE (685 aa)) folds into the Myosin motor domain. ATP is bound by residues Asn-88, Tyr-96, 139-148 (SGESGAGKTE), and 192-196 (NDNSS). Residue Lys-383 is modified to N6-methyllysine. Ser-408 carries the post-translational modification Phosphoserine. Position 486 is an N6-acetyllysine (Lys-486). Ser-536 bears the Phosphoserine mark. The segment at 608–630 (LLQLVEILRSKEPAYIRCIKPND) is actin-binding. IQ domains lie at 734–757 (RQSLATKIQAAWRGFHWRQKFLRV) and 758–786 (KRSAICIQSWWRGTLGRRKAAKRKWAAQT). 2 positions are modified to phosphoserine: Ser-864 and Ser-1041. One can recognise a TH1 domain in the interval 885-1059 (KDNYPQSVPR…NGHLAVVAPR (175 aa)).

The protein belongs to the TRAFAC class myosin-kinesin ATPase superfamily. Myosin family. In terms of assembly, interacts (via its IQ motifs) with CABP1 and CIB1; the interaction with CABP1 and CIB1 is calcium-dependent. Interacts (via tail domain) with PLEKHB1 (via PH domain); the interaction is not affected by the presence or absence of calcium and CALM. Interacts with POLR1A. Interacts with POLR2A. Component of the B-WICH complex, at least composed of SMARCA5/SNF2H, BAZ1B/WSTF, SF3B1, DEK, MYO1C, ERCC6, MYBBP1A and DDX21. Interacts (via its IQ motifs) with CALM; this precludes interaction with YWHAB. Interacts with YWHAB; this precludes interaction with CALM. Interacts with RPS6. Interacts with actin. Interacts with LLPH. Interacts with GLUT4. Interacts (via its IQ motifs) with SH3BGRL3; the interaction is dependent on calcium and takes place at membrane ruffles. Isoform 2 contains a N-acetylmethionine at position 1. As to expression, isoform 3 is expressed in small intestine, pancreas, brain, kidney, skin, heart muscle, testis, striated muscle, spleen, liver and lung (at protein level). Expressed in brain, testis, adrenal glands, thymus, spleen, kidney, lung, heart, cochlea and vestibule. Expressed in sensory hair cells of the inner ear. Expressed in adipocytes.

It localises to the cytoplasm. Its subcellular location is the nucleus. The protein localises to the cell cortex. It is found in the cell projection. The protein resides in the stereocilium membrane. It localises to the cytoplasmic vesicle. Its subcellular location is the ruffle membrane. The protein localises to the nucleolus. It is found in the nucleoplasm. In terms of biological role, myosins are actin-based motor molecules with ATPase activity. Unconventional myosins serve in intracellular movements. Their highly divergent tails bind to membranous compartments, which then are moved relative to actin filaments. Involved in glucose transporter recycling in response to insulin by regulating movement of intracellular GLUT4-containing vesicles to the plasma membrane. Component of the hair cell's (the sensory cells of the inner ear) adaptation-motor complex. Acts as a mediator of adaptation of mechanoelectrical transduction in stereocilia of vestibular hair cells. Binds phosphoinositides and links the actin cytoskeleton to cellular membranes. Its function is as follows. Involved in regulation of transcription. Associated with transcriptional active ribosomal genes. Appears to cooperate with the WICH chromatin-remodeling complex to facilitate transcription. Necessary for the formation of the first phosphodiester bond during transcription initiation. The polypeptide is Unconventional myosin-Ic (Myo1c) (Mus musculus (Mouse)).